A 244-amino-acid chain; its full sequence is Probable phosphatase NT01CX_1282 (244 aa).

9 residues coordinate Zn(2+): His-8, His-10, His-16, His-41, Glu-74, His-102, His-132, Asp-193, and His-195.

The protein belongs to the PHP family. The cofactor is Zn(2+).

This Clostridium novyi (strain NT) protein is Probable phosphatase NT01CX_1282.